We begin with the raw amino-acid sequence, 287 residues long: ATP synthase gamma chain (287 aa).

The protein belongs to the ATPase gamma chain family. In terms of assembly, F-type ATPases have 2 components, CF(1) - the catalytic core - and CF(0) - the membrane proton channel. CF(1) has five subunits: alpha(3), beta(3), gamma(1), delta(1), epsilon(1). CF(0) has three main subunits: a, b and c.

The protein localises to the cell inner membrane. Its function is as follows. Produces ATP from ADP in the presence of a proton gradient across the membrane. The gamma chain is believed to be important in regulating ATPase activity and the flow of protons through the CF(0) complex. The chain is ATP synthase gamma chain from Xylella fastidiosa (strain M23).